Here is a 338-residue protein sequence, read N- to C-terminus: Ketol-acid reductoisomerase (NADP(+)) (338 aa).

The KARI N-terminal Rossmann domain maps to 1–181 (MQIFYDKDCD…GGGRTGIIET (181 aa)). NADP(+)-binding positions include 24–27 (YGSQ), Arg47, Ser50, Ser52, and 82–85 (DEFQ). Residue His107 is part of the active site. Gly133 contributes to the NADP(+) binding site. In terms of domain architecture, KARI C-terminal knotted spans 182–327 (SFREETETDL…SKLRAMMPWI (146 aa)). Asp190, Glu194, Glu226, and Glu230 together coordinate Mg(2+). Ser251 is a binding site for substrate.

Belongs to the ketol-acid reductoisomerase family. Mg(2+) is required as a cofactor.

It carries out the reaction (2R)-2,3-dihydroxy-3-methylbutanoate + NADP(+) = (2S)-2-acetolactate + NADPH + H(+). The catalysed reaction is (2R,3R)-2,3-dihydroxy-3-methylpentanoate + NADP(+) = (S)-2-ethyl-2-hydroxy-3-oxobutanoate + NADPH + H(+). It functions in the pathway amino-acid biosynthesis; L-isoleucine biosynthesis; L-isoleucine from 2-oxobutanoate: step 2/4. Its pathway is amino-acid biosynthesis; L-valine biosynthesis; L-valine from pyruvate: step 2/4. Functionally, involved in the biosynthesis of branched-chain amino acids (BCAA). Catalyzes an alkyl-migration followed by a ketol-acid reduction of (S)-2-acetolactate (S2AL) to yield (R)-2,3-dihydroxy-isovalerate. In the isomerase reaction, S2AL is rearranged via a Mg-dependent methyl migration to produce 3-hydroxy-3-methyl-2-ketobutyrate (HMKB). In the reductase reaction, this 2-ketoacid undergoes a metal-dependent reduction by NADPH to yield (R)-2,3-dihydroxy-isovalerate. The polypeptide is Ketol-acid reductoisomerase (NADP(+)) (Acinetobacter baylyi (strain ATCC 33305 / BD413 / ADP1)).